A 375-amino-acid polypeptide reads, in one-letter code: Succinyl-diaminopimelate desuccinylase (375 aa).

His-66 provides a ligand contact to Zn(2+). Residue Asp-68 is part of the active site. Residue Asp-99 participates in Zn(2+) binding. The active-site Proton acceptor is the Glu-133. Residues Glu-134, Glu-162, and His-348 each contribute to the Zn(2+) site.

This sequence belongs to the peptidase M20A family. DapE subfamily. Homodimer. Zn(2+) serves as cofactor. The cofactor is Co(2+).

The enzyme catalyses N-succinyl-(2S,6S)-2,6-diaminopimelate + H2O = (2S,6S)-2,6-diaminopimelate + succinate. It participates in amino-acid biosynthesis; L-lysine biosynthesis via DAP pathway; LL-2,6-diaminopimelate from (S)-tetrahydrodipicolinate (succinylase route): step 3/3. Functionally, catalyzes the hydrolysis of N-succinyl-L,L-diaminopimelic acid (SDAP), forming succinate and LL-2,6-diaminopimelate (DAP), an intermediate involved in the bacterial biosynthesis of lysine and meso-diaminopimelic acid, an essential component of bacterial cell walls. This is Succinyl-diaminopimelate desuccinylase from Salmonella agona (strain SL483).